Here is a 181-residue protein sequence, read N- to C-terminus: Large ribosomal subunit protein uL6 (181 aa).

It belongs to the universal ribosomal protein uL6 family. In terms of assembly, part of the 50S ribosomal subunit.

In terms of biological role, this protein binds to the 23S rRNA, and is important in its secondary structure. It is located near the subunit interface in the base of the L7/L12 stalk, and near the tRNA binding site of the peptidyltransferase center. The protein is Large ribosomal subunit protein uL6 of Hydrogenobaculum sp. (strain Y04AAS1).